A 275-amino-acid polypeptide reads, in one-letter code: Putative pyruvate, phosphate dikinase regulatory protein (275 aa).

151 to 158 is a binding site for ADP; the sequence is GVSRTSKT.

It belongs to the pyruvate, phosphate/water dikinase regulatory protein family. PDRP subfamily.

The catalysed reaction is N(tele)-phospho-L-histidyl/L-threonyl-[pyruvate, phosphate dikinase] + ADP = N(tele)-phospho-L-histidyl/O-phospho-L-threonyl-[pyruvate, phosphate dikinase] + AMP + H(+). It carries out the reaction N(tele)-phospho-L-histidyl/O-phospho-L-threonyl-[pyruvate, phosphate dikinase] + phosphate + H(+) = N(tele)-phospho-L-histidyl/L-threonyl-[pyruvate, phosphate dikinase] + diphosphate. Functionally, bifunctional serine/threonine kinase and phosphorylase involved in the regulation of the pyruvate, phosphate dikinase (PPDK) by catalyzing its phosphorylation/dephosphorylation. The polypeptide is Putative pyruvate, phosphate dikinase regulatory protein (Rhodospirillum rubrum (strain ATCC 11170 / ATH 1.1.1 / DSM 467 / LMG 4362 / NCIMB 8255 / S1)).